The chain runs to 367 residues: Putative S-adenosyl-L-methionine-dependent methyltransferase MT0751 (367 aa).

S-adenosyl-L-methionine is bound by residues aspartate 137 and 166-167 (DL). Positions 348–358 (TRSDAHQASTT) are enriched in polar residues. A disordered region spans residues 348–367 (TRSDAHQASTTAPPPPGLTG).

It belongs to the UPF0677 family.

In terms of biological role, exhibits S-adenosyl-L-methionine-dependent methyltransferase activity. This Mycobacterium tuberculosis (strain CDC 1551 / Oshkosh) protein is Putative S-adenosyl-L-methionine-dependent methyltransferase MT0751.